The chain runs to 277 residues: WRKY transcription factor 68 (277 aa).

The segment at 51-96 (TPLMHFPTTPNSSSSEAVNGDDEEEEDGEEQQHKTKKRFKFTKMSR) is disordered. Positions 58-67 (TTPNSSSSEA) are enriched in polar residues. The segment covering 69 to 79 (NGDDEEEEDGE) has biased composition (acidic residues). Residues 84 to 96 (KTKKRFKFTKMSR) are compositionally biased toward basic residues. The segment at residues 112-177 (SEVLHLDDGY…YEGQHTHPRP (66 aa)) is a DNA-binding region (WRKY). Positions 183–206 (KEGSSPSNGSASRAHIGLPTLPPQ) are disordered.

The protein belongs to the WRKY group II-c family.

Its subcellular location is the nucleus. Transcription factor. Interacts specifically with the W box (5'-(T)TGAC[CT]-3'), a frequently occurring elicitor-responsive cis-acting element. The sequence is that of WRKY transcription factor 68 (WRKY68) from Arabidopsis thaliana (Mouse-ear cress).